The following is a 59-amino-acid chain: Ferredoxin (59 aa).

In terms of domain architecture, 4Fe-4S ferredoxin-type spans 2-29 (KVSVDKDACIGCGVCASICPDVFEMDDD). The [4Fe-4S] cluster site is built by Cys10, Cys13, and Cys16. A disulfide bridge connects residues Cys20 and Cys43. Cys51 provides a ligand contact to [4Fe-4S] cluster.

Requires [4Fe-4S] cluster as cofactor. The cofactor is [3Fe-4S] cluster.

Its function is as follows. Ferredoxins are iron-sulfur proteins that transfer electrons in a wide variety of metabolic reactions. The chain is Ferredoxin from Thermococcus litoralis.